A 328-amino-acid polypeptide reads, in one-letter code: 2-oxoglutarate-dependent dioxygenase gloF (328 aa).

The Fe2OG dioxygenase domain maps to 175 to 289 (DTSELRMNHY…RYSVAYFGKP (115 aa)). The Fe cation site is built by histidine 201, aspartate 203, and histidine 261. Arginine 280 is a binding site for 2-oxoglutarate.

This sequence belongs to the iron/ascorbate-dependent oxidoreductase family. It depends on Fe(2+) as a cofactor.

It participates in mycotoxin biosynthesis. Functionally, 2-oxoglutarate-dependent dioxygenase; part of the gene cluster that mediates the biosynthesis of pneumocandins, lipohexapeptides of the echinocandin family that prevent fungal cell wall formation by non-competitive inhibition of beta-1,3-glucan synthase. The 10,12-dimethylmyristoyl side chain is synthesized by the reducing polyketide synthase gloL/GLPKS4. The thioesterase gloN/GLHYD exclusively interacts with gloL/GLPKS4 to maintain turnover of the polyketide side chain. The 10R,12S-dimethylmyristic acid is then transferred to the first thiolation domain of the nonribosomal peptide synthetase gloA/GLNRPS4 by the acyl-AMP ligase gloD/GLligase, followed by its acylation to L-ornithine to trigger elongation of the cyclic hexapeptide. L-ornithine, 4R-hydroxyl-L-proline (generated from L-proline by the dioxygenase gloF/GLOXY2), 3S-hydroxyl-L-homotyrosine (generated by gloG/GLHtyB, gloH/GLHtyA, gloI/GLHtyC, gloJ/GLHtyD and hydroxylated at C-3 by the dioxygenase gloM/GLOXY1), 3R-hydroxyl-L-glutamine (generated from L-glutamine probably by the dioxygenase gloE/GLOXY3) and 3S-hydroxyl-L-proline (generated from L-proline by the dioxygenase gloF/GLOXY2 to yield pneumocandin B0), or 3S-hydroxyl-4S-methyl-L-proline (generated from L-leucine by the dioxygenase gloC/GLOXY4 to yield pneumocandin A0) are sequentially added to the growing chain. The last C domain of gloA/GLNRPS4 is proposed to be responsible for cyclization by condensation to form the peptide bond between L-ornithine and 3S-hydroxyl-4S-methyl-L-proline (for pneumocandin A0) or 3S-hydroxyl-L-proline (for pneumocandin B0). Finally, the subsequent C-4 hydroxylation of 3S-hydroxyl-L-homotyrosine and L-ornithine dihydroxylation at C-4 and C-5 are performed by the cytochrome P450 monooxygenases gloP/GLP450-1 and gloO/GLP450-2, respectively. This is 2-oxoglutarate-dependent dioxygenase gloF from Glarea lozoyensis (strain ATCC 20868 / MF5171).